Consider the following 77-residue polypeptide: U10-lycotoxin-Ls1a (77 aa).

Residues 1–20 (MKLIIFTGLVLFAIVSLIEA) form the signal peptide. A propeptide spanning residues 21–26 (EEESGR) is cleaved from the precursor.

Belongs to the neurotoxin 19 (CSTX) family. 09 (U10-Lctx) subfamily. Contains 4 disulfide bonds. In terms of tissue distribution, expressed by the venom gland.

The protein resides in the secreted. This chain is U10-lycotoxin-Ls1a, found in Lycosa singoriensis (Wolf spider).